Here is a 210-residue protein sequence, read N- to C-terminus: Redox-sensing transcriptional repressor Rex (210 aa).

The H-T-H motif DNA-binding region spans 15–54 (LYYRIFKRFNTDGIEKASSKQIADALGIDSATVRRDFSYF). Residue 89 to 94 (GCGNIG) participates in NAD(+) binding.

This sequence belongs to the transcriptional regulatory Rex family. As to quaternary structure, homodimer.

Its subcellular location is the cytoplasm. Functionally, modulates transcription in response to changes in cellular NADH/NAD(+) redox state. This chain is Redox-sensing transcriptional repressor Rex, found in Streptococcus agalactiae serotype Ia (strain ATCC 27591 / A909 / CDC SS700).